The chain runs to 109 residues: Small ribosomal subunit protein bS6 (109 aa).

It belongs to the bacterial ribosomal protein bS6 family.

Binds together with bS18 to 16S ribosomal RNA. The sequence is that of Small ribosomal subunit protein bS6 from Dehalococcoides mccartyi (strain ATCC BAA-2266 / KCTC 15142 / 195) (Dehalococcoides ethenogenes (strain 195)).